Reading from the N-terminus, the 216-residue chain is Maleylacetoacetate isomerase (216 aa).

The residue at position 1 (Met-1) is an N-acetylmethionine. The GST N-terminal domain occupies 4 to 87 (GKPILYSYFR…YLEETRPIPR (84 aa)). Residues 14 to 19 (SSCSWR) and Gln-45 each bind glutathione. Lys-57 is modified (N6-succinyllysine). Glutathione is bound by residues Val-59, 71-72 (QS), Gln-111, and 115-117 (NLS). In terms of domain architecture, GST C-terminal spans 92–212 (DPQKRAIVRM…HPRRQPDTPA (121 aa)). Thr-136 carries the post-translational modification Phosphothreonine. Residue Ser-137 is modified to Phosphoserine. Lys-177 carries the N6-succinyllysine modification. Ser-181 carries the post-translational modification Phosphoserine.

The protein belongs to the GST superfamily. Zeta family. In terms of assembly, homodimer. Glutathione is required as a cofactor. In terms of tissue distribution, expressed in liver, kidney, seminal glands and breast.

Its subcellular location is the cytoplasm. It catalyses the reaction 4-maleylacetoacetate = 4-fumarylacetoacetate. It carries out the reaction RX + glutathione = an S-substituted glutathione + a halide anion + H(+). It participates in amino-acid degradation; L-phenylalanine degradation; acetoacetate and fumarate from L-phenylalanine: step 5/6. In terms of biological role, probable bifunctional enzyme showing minimal glutathione-conjugating activity with ethacrynic acid and 7-chloro-4-nitrobenz-2-oxa-1, 3-diazole and maleylacetoacetate isomerase activity. Also has low glutathione peroxidase activity with t-butyl and cumene hydroperoxides. Is able to catalyze the glutathione dependent oxygenation of dichloroacetic acid to glyoxylic acid. In Mus musculus (Mouse), this protein is Maleylacetoacetate isomerase (Gstz1).